The chain runs to 1067 residues: Probable importin subunit beta-4 (1067 aa).

The 68-residue stretch at 27–94 (ATRALETKYL…RSNLLDITLK (68 aa)) folds into the Importin N-terminal domain. HEAT repeat units follow at residues 159 to 196 (KLLLDFVNLFSQTITDSSRTVRVTSVQGLGAIAEVLES), 379 to 416 (GNLPNIFPIIINGLCDNDMDVRQAALLALSQIAVEIPT), 420 to 457 (KHHAQLLPLVFELMSTQGVKVGKSACNCIDALLEGLDK), 591 to 633 (PFLE…SVET), 890 to 927 (PFTRDVFSLFMAALEDSEGEVRSNAAYSMGLLCQFSTE), and 1013 to 1050 (QHLGELIPVFASVLTGSPEQLNDELRSELLSMVKEIAP).

Belongs to the importin beta family.

The protein localises to the cytoplasm. It is found in the nucleus. Its subcellular location is the nucleus envelope. Functionally, required for nuclear protein import, its predominant substrate seems to be ribosomal proteins. Binds to nucleoporins and the GTP-bound form of gsp1 (Ran). In Schizosaccharomyces pombe (strain 972 / ATCC 24843) (Fission yeast), this protein is Probable importin subunit beta-4 (kap123).